The primary structure comprises 303 residues: Pyridoxal 5'-phosphate synthase subunit PdxS (303 aa).

Asp33 contributes to the D-ribose 5-phosphate binding site. Residue Lys90 is the Schiff-base intermediate with D-ribose 5-phosphate of the active site. Gly162 serves as a coordination point for D-ribose 5-phosphate. Residue Arg174 coordinates D-glyceraldehyde 3-phosphate. Residues Gly223 and Gly244–Ser245 contribute to the D-ribose 5-phosphate site.

Belongs to the PdxS/SNZ family. As to quaternary structure, in the presence of PdxT, forms a dodecamer of heterodimers.

The catalysed reaction is aldehydo-D-ribose 5-phosphate + D-glyceraldehyde 3-phosphate + L-glutamine = pyridoxal 5'-phosphate + L-glutamate + phosphate + 3 H2O + H(+). It functions in the pathway cofactor biosynthesis; pyridoxal 5'-phosphate biosynthesis. In terms of biological role, catalyzes the formation of pyridoxal 5'-phosphate from ribose 5-phosphate (RBP), glyceraldehyde 3-phosphate (G3P) and ammonia. The ammonia is provided by the PdxT subunit. Can also use ribulose 5-phosphate and dihydroxyacetone phosphate as substrates, resulting from enzyme-catalyzed isomerization of RBP and G3P, respectively. This chain is Pyridoxal 5'-phosphate synthase subunit PdxS, found in Mycolicibacterium smegmatis (strain ATCC 700084 / mc(2)155) (Mycobacterium smegmatis).